Consider the following 667-residue polypeptide: Transcription factor 4 (667 aa).

Positions 1-83 (MHHQQRMAAL…GTPYDHMTSR (83 aa)) are essential for MYOD1 inhibition. The 9aaTAD motif lies at 18–26 (DLLDFSAMF). Disordered stretches follow at residues 24–245 (AMFS…LGNS), 263–321 (LSYP…SQTG), 336–379 (HTNN…EGPL), 466–570 (SLLP…MANN), and 634–667 (KRRE…MGQM). Residues 29–49 (PVSSGKNGPTSLASGHFTGSN) show a composition bias toward polar residues. Serine 66, serine 87, and serine 92 each carry phosphoserine. Composition is skewed to polar residues over residues 107–126 (GSYS…QQSL), 137–155 (GTLS…SSNN), 205–216 (KPATSTFPSSFF), and 266–306 (PSHS…TDSI). Residues 337-348 (TNNSFSSNPSTP) are compositionally biased toward low complexity. A compositionally biased stretch (polar residues) spans 365-374 (NGGQASSSPN). Serine 372 is modified (phosphoserine). A leucine-zipper region spans residues 379 to 400 (LHSLQSRIEDRLERLDDAIHVL). Composition is skewed to low complexity over residues 467–480 (LLPN…LPVQ) and 503–512 (GQSVSSGSSE). Serine 515 bears the Phosphoserine mark. Composition is skewed to basic and acidic residues over residues 527 to 542 (KSSE…KDIK) and 555 to 570 (PEQK…MANN). One can recognise a bHLH domain in the interval 564 to 617 (ERRMANNARERLRVRDINEAFKELGRMVQLHLKSDKPQTKLLILHQAVAVILSL). The segment at 619 to 642 (QQVRERNLNPKAACLKRREEEKVS) is class A specific domain.

Efficient DNA binding requires dimerization with another bHLH protein. Forms homo- or heterooligomers with myogenin. Interacts with HIVEP2. Interacts with NEUROD2. Interacts with AGBL1. Interacts with BHLHA9. As to expression, expressed in adult heart, brain, placenta, skeletal muscle and to a lesser extent in the lung. In developing embryonic tissues, expression mostly occurs in the brain.

It is found in the nucleus. Functionally, transcription factor that binds to the immunoglobulin enhancer Mu-E5/KE5-motif. Involved in the initiation of neuronal differentiation. Activates transcription by binding to the E box (5'-CANNTG-3'). Binds to the E-box present in the somatostatin receptor 2 initiator element (SSTR2-INR) to activate transcription. Preferentially binds to either 5'-ACANNTGT-3' or 5'-CCANNTGG-3'. The sequence is that of Transcription factor 4 (TCF4) from Homo sapiens (Human).